Reading from the N-terminus, the 81-residue chain is Putative snRNP Sm-like protein (81 aa).

The Sm domain occupies 13-81; sequence RPLDALGNSL…RGDNIVYISP (69 aa).

This sequence belongs to the snRNP Sm proteins family.

This chain is Putative snRNP Sm-like protein, found in Methanothermobacter thermautotrophicus (strain ATCC 29096 / DSM 1053 / JCM 10044 / NBRC 100330 / Delta H) (Methanobacterium thermoautotrophicum).